The following is a 556-amino-acid chain: Urocanate hydratase (556 aa).

NAD(+) is bound by residues 52–53 (GG), Gln130, 176–178 (GMG), Glu196, Arg201, 242–243 (NA), 263–267 (QTSAH), 273–274 (YL), and Tyr322. Cys410 is a catalytic residue. Position 492 (Gly492) interacts with NAD(+).

Belongs to the urocanase family. It depends on NAD(+) as a cofactor.

The protein resides in the cytoplasm. It carries out the reaction 4-imidazolone-5-propanoate = trans-urocanate + H2O. It functions in the pathway amino-acid degradation; L-histidine degradation into L-glutamate; N-formimidoyl-L-glutamate from L-histidine: step 2/3. Functionally, catalyzes the conversion of urocanate to 4-imidazolone-5-propionate. This is Urocanate hydratase from Bradyrhizobium sp. (strain BTAi1 / ATCC BAA-1182).